The chain runs to 321 residues: Nucleus-vacuole junction protein 1 (321 aa).

The first 22 residues, 1-22, serve as a signal peptide directing secretion; that stretch reads MTRPPLVRGIFSLGLSVAVLKG. Residues 73–125 form a TSC13-binding region; the sequence is ELSWRKVFNFISRQSSELDARIYVLILLLSFLLPIAWTVLDGDRETTLEDKDN. The chain crosses the membrane as a helical span at residues 94 to 114; that stretch reads IYVLILLLSFLLPIAWTVLDG. Positions 139 to 195 are OSH1-binding; the sequence is KHYNDGERAVLQFGKNRSEPIILSYKDMNVLEGEHEFTSKEEHSNSHLTSKSENALS. Ser-156 is modified (phosphoserine). The span at 174-183 shows a compositional bias: basic and acidic residues; that stretch reads EFTSKEEHSN. The tract at residues 174–194 is disordered; it reads EFTSKEEHSNSHLTSKSENAL. The segment covering 184-194 has biased composition (polar residues); sequence SHLTSKSENAL. Ser-199 carries the phosphoserine modification. The tract at residues 210 to 275 is disordered; that stretch reads QLEEDKNEPN…SLKSSTSFPI (66 aa). The VAC8-binding stretch occupies residues 233–321; sequence DCSSSSEVES…EQAYSQPFRY (89 aa). Basic and acidic residues predominate over residues 242–262; it reads SQSKCRKESTAEPDSLSRDTR. The segment covering 263–272 has biased composition (low complexity); that stretch reads TTSSLKSSTS. Phosphoserine occurs at positions 285 and 298. A disordered region spans residues 299 to 321; the sequence is PTKSSNLDAQVNTEQAYSQPFRY.

In terms of assembly, interacts with OSH1, TSC13 and VAC8.

Its subcellular location is the nucleus outer membrane. Involved in the formation of nucleus-vacuole (NV) junctions during piecemeal microautophagy of the nucleus (PMN). NV junctions are interorganelle interfaces mediated by NVJ1 in the nuclear envelope and VAC8 on the vacuole membrane. Together, NVJ1 and VAC8 form Velcro-like patches through which teardrop-like portions of the nucleus are pinched off into the vacuolar lumen and degraded by the PMN process. Also acts as an outer-nuclear membrane receptor for OSH1 and TSC13. The chain is Nucleus-vacuole junction protein 1 (NVJ1) from Saccharomyces cerevisiae (strain YJM789) (Baker's yeast).